Reading from the N-terminus, the 202-residue chain is Recombination protein RecR (202 aa).

Residues 57-72 form a C4-type zinc finger; the sequence is CGVCRTFTEQPCCDIC. A Toprim domain is found at 81–176; that stretch reads GQICVVESPS…STTKIAHGVP (96 aa).

It belongs to the RecR family.

May play a role in DNA repair. It seems to be involved in an RecBC-independent recombinational process of DNA repair. It may act with RecF and RecO. In Hamiltonella defensa subsp. Acyrthosiphon pisum (strain 5AT), this protein is Recombination protein RecR.